Here is a 31-residue protein sequence, read N- to C-terminus: Potassium channel toxin alpha-KTx 5.4 (31 aa).

3 disulfides stabilise this stretch: C3-C21, C8-C26, and C12-C28. Positions R6–E9 are [R/K]XCQ motif. Y31 is subject to Tyrosine amide.

The protein belongs to the short scorpion toxin superfamily. Potassium channel inhibitor family. Alpha-KTx 05 subfamily. As to expression, expressed by the venom gland.

The protein resides in the secreted. Its function is as follows. Blocks small conductance calcium-activated potassium channels. Shows activity on KCa2.2/KCNN2 (IC(50)=0.0243 nM), KCa2.3/KCNN3 (IC(50)=1.7 nM), and KCa2.1/KCNN1 (IC(50)=42 nM). Induces cell death when tested on human T lymphoblastic leukemia Jurkat E6.1 and human breast cancer MDA-MB-231 cell lines which constituvely express KCa2.2/KCNN2, but not on human peripheral blood lymphocytes (which do not express KCa2.2/KCNN2). The protein is Potassium channel toxin alpha-KTx 5.4 of Hottentotta tamulus (Eastern Indian scorpion).